Consider the following 393-residue polypeptide: MEQCACVERELDKVLQKFLTYGQHCERSLEELLHYVGQLRAELASAALQGTPLSATLSLVMSQCCRKIKDTVQKLASDHKDIHSSVSRVGKAIDRNFDSEICGVVSDAVWDAREQQQQILQMAIVEHLYQQGMLSVAEELCQESTLNVDLDFKQPFLELNRILEALHEQDLGPALEWAVSHRQRLLELNSSLEFKLHRLHFIRLLAGGPAKQLEALSYARHFQPFARLHQREIQVMMGSLVYLRLGLEKSPYCHLLDSSHWAEICETFTRDACSLLGLSVESPLSVSFASGCVALPVLMNIKAVIEQRQCTGVWNHKDELPIEIELGMKCWYHSVFACPILRQQTSDSNPPIKLICGHVISRDALNKLINGGKLKCPYCPMEQNPADGKRIIF.

The residue at position 1 (Met-1) is an N-acetylmethionine. Positions 116-148 (QQQILQMAIVEHLYQQGMLSVAEELCQESTLNV) constitute a LisH domain. The 58-residue stretch at 155-212 (PFLELNRILEALHEQDLGPALEWAVSHRQRLLELNSSLEFKLHRLHFIRLLAGGPAKQ) folds into the CTLH domain. An RING-Gid-type zinc finger spans residues 338–379 (CPILRQQTSDSNPPIKLICGHVISRDALNKLINGGKLKCPYC).

Identified in the CTLH complex that contains GID4, RANBP9 and/or RANBP10, MKLN1, MAEA, RMND5A (or alternatively its paralog RMND5B), GID8, ARMC8, WDR26 and YPEL5. Within this complex, MAEA, RMND5A (or alternatively its paralog RMND5B), GID8, WDR26, and RANBP9 and/or RANBP10 form the catalytic core, while GID4, MKLN1, ARMC8 and YPEL5 have ancillary roles.

Its subcellular location is the cytoplasm. The protein localises to the cytosol. The catalysed reaction is S-ubiquitinyl-[E2 ubiquitin-conjugating enzyme]-L-cysteine + [acceptor protein]-L-lysine = [E2 ubiquitin-conjugating enzyme]-L-cysteine + N(6)-ubiquitinyl-[acceptor protein]-L-lysine.. Core component of the CTLH E3 ubiquitin-protein ligase complex that selectively accepts ubiquitin from UBE2H and mediates ubiquitination and subsequent proteasomal degradation of the transcription factor HBP1. MAEA and RMND5A are both required for catalytic activity of the CTLH E3 ubiquitin-protein ligase complex. Catalytic activity of the complex is required for normal cell proliferation. The CTLH E3 ubiquitin-protein ligase complex is not required for the degradation of enzymes involved in gluconeogenesis, such as FBP1. The polypeptide is E3 ubiquitin-protein transferase RMND5B (RMND5B) (Homo sapiens (Human)).